The sequence spans 959 residues: Ataxin-2 homolog (959 aa).

In terms of domain architecture, Sm spans 13 to 92 (DVLSAINDMI…IVDFAYVTQE (80 aa)). Disordered stretches follow at residues 203–378 (AREI…GSRV), 392–484 (TAPK…SVIT), 501–528 (PRVA…HPAM), 697–831 (PPQG…QHIQ), and 867–959 (PMQQ…QSPP). The segment covering 226 to 235 (DLDKITRQED) has biased composition (basic and acidic residues). Residues 246–260 (NNSFNQQQQQRRNPN) show a composition bias toward low complexity. Residues 270 to 281 (RRAEGLRGDRRN) are compositionally biased toward basic and acidic residues. Over residues 282–313 (SGSSSANNSRYGAPAAAQQNYSQNQQQQQGQK) the composition is skewed to low complexity. Composition is skewed to polar residues over residues 341–356 (RQQQ…NNNV) and 473–484 (VSVTSENDSVIT). Composition is skewed to low complexity over residues 504–528 (APAT…HPAM), 697–707 (PPQGQQQQPRY), and 715–725 (QQQQQQPQQQQ). 2 stretches are compositionally biased toward polar residues: residues 726 to 742 (FSGE…SQPT) and 756 to 765 (APQNGNMQAE). The segment covering 766 to 788 (SSSNASHSGSTSSQSGQRSGSPP) has biased composition (low complexity). Pro residues predominate over residues 789–798 (GAVPPPPPPQ). Low complexity-rich tracts occupy residues 822–831 (MMQQQQQHIQ), 867–876 (PMQQNQHPQQ), and 902–911 (QQQQQQQQQQ). Polar residues predominate over residues 912 to 922 (MHRQNSLPQQF). Low complexity predominate over residues 923-935 (QGNQGVNPSGQQS). A compositionally biased stretch (polar residues) spans 948–959 (TPRDQQHSQSPP).

The protein belongs to the ataxin-2 family. In terms of assembly, interacts (via C-terminus) with szy-20 (via C-terminus); the interaction is RNA independent. Interacts with pab-1. Interacts with gdi-1. As to expression, expressed in the central nervous system, dorsal and ventral nerve cord, intestinal lining and body-wall muscle. Expressed in the gonad.

It is found in the cytoplasm. The protein resides in the nucleus. Its function is as follows. Probable RNA-binding protein that negatively regulates the translation of targets. Functions with RNA-binding protein szy-20 to ensure embryonic cell division, and to this end, plays a role in the regulation of centrosome assembly, position and size, and in astral microtubule outgrowth and nucleation. Required for gonad development, germ cell proliferation and for the production of oocytes. Regulates whole body growth and fat accumulation in response to food availability, and this may be through the mTOR pathway, upstream of daf-15 and rheb-1. The protein is Ataxin-2 homolog of Caenorhabditis elegans.